The following is a 200-amino-acid chain: Inner membrane-spanning protein YciB (200 aa).

6 helical membrane-spanning segments follow: residues 7–27 (HPLF…FVNA), 32–52 (FAAT…SYVV), 56–76 (IPLM…LTLV), 93–113 (LFAA…AIMF), 126–146 (ILTF…EIIW), and 153–173 (FWVG…AIAQ).

Belongs to the YciB family.

It is found in the cell inner membrane. Plays a role in cell envelope biogenesis, maintenance of cell envelope integrity and membrane homeostasis. The sequence is that of Inner membrane-spanning protein YciB from Bradyrhizobium sp. (strain ORS 278).